The following is an 836-amino-acid chain: Protein-glutamine gamma-glutamyltransferase K (836 aa).

Residues 1–33 (MDGPRSDMGRSDVSRSDMSRSDMGRSDMGRSDV) are compositionally biased toward basic and acidic residues. Disordered stretches follow at residues 1-68 (MDGP…SRGG) and 89-125 (DDWG…DGTI). A Phosphothreonine modification is found at T46. Phosphoserine occurs at positions 48, 98, and 112. Residues 89–112 (DDWGREPSDSRDRGSSSRGGRPDS) are compositionally biased toward basic and acidic residues. Catalysis depends on residues C397, H456, and D479. 4 residues coordinate Ca(2+): N519, D521, E568, and E573. Position 824 is a phosphoserine (S824).

It belongs to the transglutaminase superfamily. Transglutaminase family. Interacts with PLAAT4. Ca(2+) is required as a cofactor. Palmitoylated. In terms of processing, the membrane anchorage region possesses a cluster of five cysteines within which fatty acid(s) may become thioester-linked. It is subject to phorbol ester-stimulated phosphorylation and is hypersensitive to proteolysis, which releases the enzyme in a soluble form. Post-translationally, tyrosine-phosphorylated.

The protein resides in the membrane. It catalyses the reaction L-glutaminyl-[protein] + L-lysyl-[protein] = [protein]-L-lysyl-N(6)-5-L-glutamyl-[protein] + NH4(+). With respect to regulation, inhibited by retinoic acid, but phorbol ester treatment activates it. In terms of biological role, catalyzes the cross-linking of proteins and the conjugation of polyamines to proteins. Responsible for cross-linking epidermal proteins during formation of the stratum corneum. Involved in cell proliferation. This Oryctolagus cuniculus (Rabbit) protein is Protein-glutamine gamma-glutamyltransferase K (TGM1).